The sequence spans 1381 residues: MEVLMAERPTQVFHNKVIDGTAMKRLISRFIDHYGIGYTSHILDQVKTLGFRQATAASISLGIDDLLTIPSKRWLVQDAEQQSFILEKHHHYGNVHAVEKLRQSIEIWYATSEYLRQEMTPNFRMTDPFNPVHIMSFSGARGNASQVHQLVGMRGLMSDPQGQMIDLPIQSNLREGLSLTEYIISCYGARKGVVDTAIRTSDAGYLTRRLVEVVQHIVVRRTDCGTVRGISVSPRNGMMADRIFIQTLIGRVLADDIYIGSRCIATRNQDIGVGLVNRFITFRAQPISIRTPFTCRSTSWICQLCYGRSPAHDDLVELGEAVGIIAGQSIGEPGTQLTLRTFHTGGVFTGGTAEHVRAPSNGKIKFNEDLVHPTRTRHGHPAFLCSRDLYVTIESEDIIHNVCIPPKSFLLVQNDQYVESEQVIAEIRARTSTLNLKEKVRKHIYSDSEGEMHWNTDVYHAPEFTYGNIHLLPKTSHLWILLGEPWRSSLGPCSIHKDQDQMNAYSLSVKRRYISNPSVTNNQVRHKFFSSYFSGKNQKGDRIPDYSELNRMTCTGRCNLRYPGILDGNSDLLAKRRRNRVIIPLDSIQEGENQLIPSSGISIEIPRNGILRRNSILAYFDDPRYIRKSSGLTKYETRELNSIVNEEDLIEYRGVKVFWPKYQKEVNPFFFIPVEIHILAESSSIMVRHNSIIGVDTQITLNRRSRVGGLVRVKKKAEKIKLIIFSGDIHFPEKTNKAFRLIPPGGGKKNSKEYKKLKNWLYIQRMKLSRYEKKYFVLVQPVVPYKKTDGINLGRLFPADLLQESDNLQLRVVNYILYYDPILEIWDTSIQLVRTCLVLNWDQDKKIEKACASFVEIRTNGLIRDFLRIDLAKSPISYTGKRNDLPGSGLIYENGSDRANVNPFSSIYSSSKARIQESLNPNQGTIHTLLNRNKESQSLIILSSSNCSRIGPFNDVKSPNVIKESIKKDPLIPIRNSLGPLGTGFPISNFDLFSHLITHNKILVTNYLQLDNLKHIFQILKYYLLDENGKIYNPYSCSNIILNPFNLNWYFLHYNYCEETSTIVSLGQFLCENVCIAKKGPHLKSGQVLILQVDSVVIRSAKPYLATPGATVHGHYGEILYEGDTLVTFIYEKSRSGDITQGLPKVEQVLEVRSIDSISMNLEKRIEGWNKCITRILGIPWAFFIGAELTIVQSRISLVNKVQKVYRSQGVQIHNRHIEIIVRQITSKVLVSEDEMSNVFSPGELIGLLRAERMGRALEEAICYQAVLLGITRASMNTQSFISEASFQETARVLAKAALLGRIDWLKGLKENVVLGGMIPVGSGFKTPSSEPNNIPNNIAFELKKENLLEGEMKDILFYHRKFFDSCLSKNFHDTQEQSFF.

C224, C295, C302, and C305 together coordinate Zn(2+).

This sequence belongs to the RNA polymerase beta' chain family. RpoC2 subfamily. As to quaternary structure, in plastids the minimal PEP RNA polymerase catalytic core is composed of four subunits: alpha, beta, beta', and beta''. When a (nuclear-encoded) sigma factor is associated with the core the holoenzyme is formed, which can initiate transcription. It depends on Zn(2+) as a cofactor.

The protein localises to the plastid. Its subcellular location is the chloroplast. It catalyses the reaction RNA(n) + a ribonucleoside 5'-triphosphate = RNA(n+1) + diphosphate. In terms of biological role, DNA-dependent RNA polymerase catalyzes the transcription of DNA into RNA using the four ribonucleoside triphosphates as substrates. This chain is DNA-directed RNA polymerase subunit beta'', found in Guizotia abyssinica (Niger).